A 116-amino-acid chain; its full sequence is RutC family protein HI_1627 (116 aa).

This sequence belongs to the RutC family.

This is RutC family protein HI_1627 from Haemophilus influenzae (strain ATCC 51907 / DSM 11121 / KW20 / Rd).